The primary structure comprises 542 residues: CTP synthase (542 aa).

An amidoligase domain region spans residues 1-265 (MARYIFITGG…DDEVLAAFGL (265 aa)). A CTP-binding site is contributed by Ser-13. UTP is bound at residue Ser-13. 14–19 (SLGKGL) is an ATP binding site. Residue Tyr-54 participates in L-glutamine binding. Asp-71 is a binding site for ATP. Mg(2+) contacts are provided by Asp-71 and Glu-139. CTP-binding positions include 146-148 (DIE), 186-191 (KTKPTQ), and Lys-222. Residues 186 to 191 (KTKPTQ) and Lys-222 each bind UTP. 238-240 (RDA) serves as a coordination point for ATP. A Glutamine amidotransferase type-1 domain is found at 290–541 (TIAIVGKYTG…IQAAVVQSRL (252 aa)). Gly-352 provides a ligand contact to L-glutamine. The active-site Nucleophile; for glutamine hydrolysis is Cys-379. Residues 380–383 (FGMQ), Glu-403, and Arg-469 each bind L-glutamine. Active-site residues include His-514 and Glu-516.

Belongs to the CTP synthase family. In terms of assembly, homotetramer.

The catalysed reaction is UTP + L-glutamine + ATP + H2O = CTP + L-glutamate + ADP + phosphate + 2 H(+). It carries out the reaction L-glutamine + H2O = L-glutamate + NH4(+). The enzyme catalyses UTP + NH4(+) + ATP = CTP + ADP + phosphate + 2 H(+). It functions in the pathway pyrimidine metabolism; CTP biosynthesis via de novo pathway; CTP from UDP: step 2/2. Its activity is regulated as follows. Allosterically activated by GTP, when glutamine is the substrate; GTP has no effect on the reaction when ammonia is the substrate. The allosteric effector GTP functions by stabilizing the protein conformation that binds the tetrahedral intermediate(s) formed during glutamine hydrolysis. Inhibited by the product CTP, via allosteric rather than competitive inhibition. Functionally, catalyzes the ATP-dependent amination of UTP to CTP with either L-glutamine or ammonia as the source of nitrogen. Regulates intracellular CTP levels through interactions with the four ribonucleotide triphosphates. This Nitrobacter hamburgensis (strain DSM 10229 / NCIMB 13809 / X14) protein is CTP synthase.